The sequence spans 291 residues: Halorhodopsin (291 aa).

Residues 1–30 lie on the Extracellular side of the membrane; it reads MTETLPPVTESAVALQAEVTQRELFEFVLN. The chain crosses the membrane as a helical span at residues 31–56; that stretch reads DPLLASSLYINIALAGLSILLFVFMT. At 57 to 62 the chain is on the cytoplasmic side; sequence RGLDDP. A helical membrane pass occupies residues 63–86; it reads RAKLIAVSTILVPVVSIASYTGLA. The Extracellular segment spans residues 87 to 120; it reads SGLTISVLEMPAGHFAEGSSVMLGGEEVDGVVTM. Residues 121–142 traverse the membrane as a helical segment; the sequence is WGRYLTWALSTPMILLALGLLA. Over 143–145 the chain is Cytoplasmic; that stretch reads GSN. A helical membrane pass occupies residues 146–169; that stretch reads ATKLFTAITFDIAMCVTGLAAALT. The Extracellular segment spans residues 170 to 172; sequence TSS. Residues 173–195 form a helical membrane-spanning segment; the sequence is HLMRWFWYAISCACFLVVLYILL. The Cytoplasmic portion of the chain corresponds to 196–207; that stretch reads VEWAQDAKAAGT. A helical membrane pass occupies residues 208-231; it reads ADMFNTLKLLTVVMWLGYPIVWAL. Topologically, residues 232–240 are extracellular; that stretch reads GVEGIAVLP. Residues 241–269 form a helical membrane-spanning segment; the sequence is VGVTSWGYSFLDIVAKYIFAFLLLNYLTS. Lys256 carries the N6-(retinylidene)lysine modification. The Cytoplasmic portion of the chain corresponds to 270 to 291; it reads NESVVSGSILDVPSASGTPADD.

The protein belongs to the archaeal/bacterial/fungal opsin family.

Its subcellular location is the cell membrane. In terms of biological role, light-driven anion pump. Binding affinity for the anions is in the order, bromide &gt; chloride &gt; nitrate &gt; azide &gt; bromate and binding is pH dependent. The protein is Halorhodopsin (hop) of Natronomonas pharaonis (Natronobacterium pharaonis).